The chain runs to 304 residues: Protoheme IX farnesyltransferase (304 aa).

The next 7 helical transmembrane spans lie at 24 to 44 (VMTL…GTIH), 45 to 65 (PVIA…AAAL), 107 to 127 (VFVM…FSIF), 145 to 165 (IVIG…AVTG), 172 to 192 (VLLF…LALF), 234 to 254 (WIGG…LVFV), and 277 to 297 (LFGY…GDRL).

This sequence belongs to the UbiA prenyltransferase family. Protoheme IX farnesyltransferase subfamily.

Its subcellular location is the cell inner membrane. It carries out the reaction heme b + (2E,6E)-farnesyl diphosphate + H2O = Fe(II)-heme o + diphosphate. It participates in porphyrin-containing compound metabolism; heme O biosynthesis; heme O from protoheme: step 1/1. Converts heme B (protoheme IX) to heme O by substitution of the vinyl group on carbon 2 of heme B porphyrin ring with a hydroxyethyl farnesyl side group. This chain is Protoheme IX farnesyltransferase, found in Novosphingobium aromaticivorans (strain ATCC 700278 / DSM 12444 / CCUG 56034 / CIP 105152 / NBRC 16084 / F199).